Here is a 200-residue protein sequence, read N- to C-terminus: Ribosomal RNA large subunit methyltransferase E (200 aa).

5 residues coordinate S-adenosyl-L-methionine: Gly51, Trp53, Asp71, Asp90, and Asp112. The active-site Proton acceptor is the Lys151.

The protein belongs to the class I-like SAM-binding methyltransferase superfamily. RNA methyltransferase RlmE family.

It is found in the cytoplasm. The enzyme catalyses uridine(2552) in 23S rRNA + S-adenosyl-L-methionine = 2'-O-methyluridine(2552) in 23S rRNA + S-adenosyl-L-homocysteine + H(+). Its function is as follows. Specifically methylates the uridine in position 2552 of 23S rRNA at the 2'-O position of the ribose in the fully assembled 50S ribosomal subunit. The chain is Ribosomal RNA large subunit methyltransferase E from Treponema pallidum (strain Nichols).